We begin with the raw amino-acid sequence, 89 residues long: RNA-binding protein Hfq (89 aa).

Positions 9-68 constitute a Sm domain; that stretch reads EPFLNALRKEKVPVSIYLVNGIKLQGQIESFDQFVILLRNNVNQMVYKHAISTVVPARNV. Positions 70–89 are disordered; that stretch reads TAPPVPTETHAQSSEEFGNI. A compositionally biased stretch (polar residues) spans 78–89; the sequence is THAQSSEEFGNI.

It belongs to the Hfq family. Homohexamer.

RNA chaperone that binds small regulatory RNA (sRNAs) and mRNAs to facilitate mRNA translational regulation in response to envelope stress, environmental stress and changes in metabolite concentrations. Also binds with high specificity to tRNAs. The polypeptide is RNA-binding protein Hfq (Alkalilimnicola ehrlichii (strain ATCC BAA-1101 / DSM 17681 / MLHE-1)).